The sequence spans 153 residues: D-aminoacyl-tRNA deacylase (153 aa).

A Gly-cisPro motif, important for rejection of L-amino acids motif is present at residues 142 to 143 (GP).

This sequence belongs to the DTD family. Homodimer.

It is found in the cytoplasm. The enzyme catalyses glycyl-tRNA(Ala) + H2O = tRNA(Ala) + glycine + H(+). The catalysed reaction is a D-aminoacyl-tRNA + H2O = a tRNA + a D-alpha-amino acid + H(+). In terms of biological role, an aminoacyl-tRNA editing enzyme that deacylates mischarged D-aminoacyl-tRNAs. Also deacylates mischarged glycyl-tRNA(Ala), protecting cells against glycine mischarging by AlaRS. Acts via tRNA-based rather than protein-based catalysis; rejects L-amino acids rather than detecting D-amino acids in the active site. By recycling D-aminoacyl-tRNA to D-amino acids and free tRNA molecules, this enzyme counteracts the toxicity associated with the formation of D-aminoacyl-tRNA entities in vivo and helps enforce protein L-homochirality. The polypeptide is D-aminoacyl-tRNA deacylase (Acidovorax ebreus (strain TPSY) (Diaphorobacter sp. (strain TPSY))).